The sequence spans 116 residues: uncharacterized protein (116 aa).

This is an uncharacterized protein from Acheta domesticus (House cricket).